Reading from the N-terminus, the 1641-residue chain is Vitellogenin-1 (1641 aa).

Positions 1–18 are cleaved as a signal peptide; sequence MWYLAFLLIIGAYAADHA. A Vitellogenin domain is found at 19-790; the sequence is WETGNEYHYL…SQDTTVPKSS (772 aa). A disulfide bridge connects residues Cys-172 and Cys-211. Positions 322 to 334 are enriched in polar residues; the sequence is LRQPSVSLNSMEA. A disordered region spans residues 322-372; sequence LRQPSVSLNSMEARSSENSNEENRSDDDRSNFLSNSGEEREYLQSKPTLNE. Residues 342-351 show a composition bias toward basic and acidic residues; that stretch reads EENRSDDDRS. Asn-344, Asn-549, Asn-566, Asn-831, Asn-875, Asn-898, Asn-1001, Asn-1053, Asn-1268, Asn-1393, Asn-1396, Asn-1505, and Asn-1523 each carry an N-linked (GlcNAc...) asparagine glycan. A VWFD domain is found at 1410–1597; the sequence is ESVCVLDKTH…TYAMTQESCQ (188 aa). Cysteines 1435 and 1596 form a disulfide. Residues 1594 to 1641 are disordered; sequence ESCQGPAPENKRKAEQSTCMSRSYRPSDVISDREAGRSSTKNRGWGYH.

In terms of tissue distribution, hemolymph.

The protein resides in the secreted. Its function is as follows. Precursor of the egg-yolk proteins that are sources of nutrients during embryonic development. This chain is Vitellogenin-1, found in Solenopsis invicta (Red imported fire ant).